A 173-amino-acid polypeptide reads, in one-letter code: Bacterial deubiquitinase-like protein BilC (173 aa).

Zn(2+) is bound by residues H103, H105, and D115.

This sequence belongs to the M67B family. The cofactor is Zn(2+).

Component of the Bil (bacterial ISG15-like) antiviral defense system, composed of BilA, BilB, BilC and BilD. The Bil system specifically conjugates a ubiquitin-like moiety (bilA) to the bacteriophage central tail fiber (CTF, or tip attachment protein J) via reactions involving E1 (bilD) and E2 (bilB). Modifies CTF of phage SECphi27 and SECphi4, which probably interferes with assembly of the phage tail. Also modifies T5 baseplate hub protein pb3 (gene D16), but not gp27 of phage T6 (Bil defends against T6). BilC is a probable metalloprotease that may cleave non-specifically conjugated targets. Bil-encoding bacteria produce mostly defective phage SECphi27, many of which have phage assembly defects, including no tails. SECphi27 phage progeny produced in E.coli with the Bil system inject less DNA into naive host cells, maybe because the phage are less able to adsorb and inject their DNA into host cells. Functionally, expression of the Bil system in E.coli (strain MG1655) confers about 100-fold resistance to phage SECphi27, SECphi18, SECphi6, SECphi4 and T5, but not to SECphi17. When cells expressing the Bil system are infected by phage SECphi27 at low multiplicity of infection (0.03 MOI) the culture survives, at 3.0 MOI the culture collapses at the same time as cells without the Bil system. In terms of biological role, cleaves a ubiquitin-GFP (Ubl-GFP) fusion protein in vivo. The chain is Bacterial deubiquitinase-like protein BilC from Collimonas sp. (strain OK412).